The following is a 496-amino-acid chain: Serine/threonine-protein kinase Sgk3 (496 aa).

The region spanning 12 to 124 is the PX domain; sequence SCPSVSIPSS…AFLQMDSPRH (113 aa). Positions 121-157 are disordered; the sequence is SPRHQSDPSEDEDERSTPKPHSTSRNINLGPTGNPHA. Phosphoserine is present on residues S126 and S129. A compositionally biased stretch (polar residues) spans 139 to 151; the sequence is KPHSTSRNINLGP. The region spanning 162-464 is the Protein kinase domain; sequence FDFLKVIGKG…EETVPYSVCV (303 aa). Residues 168–176 and K191 contribute to the ATP site; that span reads IGKGSFGKV. The Nuclear localization signal motif lies at 195 to 205; it reads KKIVLNRKEQK. The Proton acceptor role is filled by D286. T320 carries the post-translational modification Phosphothreonine; by PDPK1. Residues 420–496 form the AGC-kinase C-terminal domain; it reads ESLSWTDLVQ…YAPPSEDLFL (77 aa). Residue S486 is modified to Phosphoserine.

This sequence belongs to the protein kinase superfamily. AGC Ser/Thr protein kinase family. In terms of assembly, interacts with GSK3B and FLII. Interacts with PDPK1 in a phosphorylation-dependent manner. Post-translationally, activated by phosphorylation on Ser-486 by an unknown kinase (may be mTORC2 but not confirmed), transforming it into a substrate for PDPK1 which then phosphorylates it on Thr-320.

It localises to the cytoplasmic vesicle. The protein resides in the early endosome. Its subcellular location is the recycling endosome. The catalysed reaction is L-seryl-[protein] + ATP = O-phospho-L-seryl-[protein] + ADP + H(+). It carries out the reaction L-threonyl-[protein] + ATP = O-phospho-L-threonyl-[protein] + ADP + H(+). Two specific sites, one in the kinase domain (Thr-320) and the other in the C-terminal regulatory region (Ser-486), need to be phosphorylated for its full activation. Serine/threonine-protein kinase which is involved in the regulation of a wide variety of ion channels, membrane transporters, cell growth, proliferation, survival and migration. Up-regulates Na(+) channels: SCNN1A/ENAC and SCN5A, K(+) channels: KCNA3/KV1.3, KCNE1, KCNQ1 and KCNH2/HERG, epithelial Ca(2+) channels: TRPV5 and TRPV6, chloride channel: BSND, creatine transporter: SLC6A8, Na(+)/dicarboxylate cotransporter: SLC13A2/NADC1, Na(+)-dependent phosphate cotransporter: SLC34A2/NAPI-2B, amino acid transporters: SLC1A5/ASCT2 and SLC6A19, glutamate transporters: SLC1A3/EAAT1, SLC1A6/EAAT4 and SLC1A7/EAAT5, glutamate receptors: GRIA1/GLUR1 and GRIK2/GLUR6, Na(+)/H(+) exchanger: SLC9A3/NHE3, and the Na(+)/K(+) ATPase. Plays a role in the regulation of renal tubular phosphate transport and bone density. Phosphorylates NEDD4L and GSK3B. Positively regulates ER transcription activity through phosphorylation of FLII. Negatively regulates the function of ITCH/AIP4 via its phosphorylation and thereby prevents CXCR4 from being efficiently sorted to lysosomes. This Rattus norvegicus (Rat) protein is Serine/threonine-protein kinase Sgk3 (Sgk3).